Reading from the N-terminus, the 108-residue chain is Sperm-egg fusion protein LLCFC1 (108 aa).

The N-terminal stretch at 1–30 (MTSLGSQLHRATFLTALLLLLLLQVKGVKT) is a signal peptide. Residues 39-49 (GDKSQKDKVSS) show a composition bias toward basic and acidic residues. The segment at 39–64 (GDKSQKDKVSSEDQGEEEYEEHFEAS) is disordered.

Detected in testicular germ cells and spermatozoa (at protein level). Abundantly expressed in testis.

The protein resides in the secreted. Functionally, sperm protein required for fusion of sperm with the egg membrane during fertilization. This is Sperm-egg fusion protein LLCFC1 from Mus musculus (Mouse).